Here is a 315-residue protein sequence, read N- to C-terminus: Neuroguidin (315 aa).

Position 2 is an N-acetylalanine (Ala-2). Residues Leu-7 to Ala-41 adopt a coiled-coil conformation. The tract at residues Ala-41–Pro-174 is necessary for interaction with EIF4E. A phosphoserine mark is found at Ser-121, Ser-142, and Ser-143. A disordered region spans residues Ser-123–Gln-190. Acidic residues predominate over residues Glu-144–Gln-155. Over residues His-180–Gln-190 the composition is skewed to basic and acidic residues. Residues Tyr-181 to Ser-203 are a coiled coil. 2 positions are modified to phosphoserine: Ser-204 and Ser-214. Basic and acidic residues-rich tracts occupy residues Gln-212–His-225 and Ser-232–Tyr-241. Disordered stretches follow at residues Gln-212 to Glu-243 and Gly-284 to Trp-315. Basic residues predominate over residues Val-295–Trp-315.

Belongs to the SAS10 family. Interacts with CPEB1 and EIF4E. Expressed in testis, ovary, spleen, kidney, hippocampus and cerebellum (at protein level). Expressed in testis, ovary, spleen, kidney, brain.

Its subcellular location is the nucleus. It is found in the nucleolus. It localises to the chromosome. The protein localises to the centromere. The protein resides in the cytoplasm. Its subcellular location is the cell projection. It is found in the axon. It localises to the dendrite. The protein localises to the filopodium. Its function is as follows. Part of the small subunit (SSU) processome, first precursor of the small eukaryotic ribosomal subunit. During the assembly of the SSU processome in the nucleolus, many ribosome biogenesis factors, an RNA chaperone and ribosomal proteins associate with the nascent pre-rRNA and work in concert to generate RNA folding, modifications, rearrangements and cleavage as well as targeted degradation of pre-ribosomal RNA by the RNA exosome. Its dissociation from the complex determines the transition from state pre-A1 to state pre-A1*. Inhibits mRNA translation in a cytoplasmic polyadenylation element (CPE)-dependent manner. In Mus musculus (Mouse), this protein is Neuroguidin (Ngdn).